Here is a 127-residue protein sequence, read N- to C-terminus: MKKALWLLLAAVPVVLVACGGSDDDKQTAQVDYLALPGDAKLDTRSVDYKCENGRKFTVQYLNKGDNSLAVVPVSDNSTLVFSNVISASGAKYAAGQYIWWTKGEEATLYGDWKGGEPTDGVACKER.

An N-terminal signal peptide occupies residues 1–18; the sequence is MKKALWLLLAAVPVVLVA. The N-palmitoyl cysteine moiety is linked to residue Cys19. Cys19 carries the S-diacylglycerol cysteine lipid modification. Cysteines 51 and 124 form a disulfide.

It belongs to the MliC family. Type 2 subfamily. Homodimer.

Its subcellular location is the cell outer membrane. Specifically inhibits C-type lysozymes. This Pseudomonas aeruginosa (strain ATCC 15692 / DSM 22644 / CIP 104116 / JCM 14847 / LMG 12228 / 1C / PRS 101 / PAO1) protein is Membrane-bound lysozyme inhibitor of C-type lysozyme.